Consider the following 454-residue polypeptide: CCA-adding enzyme (454 aa).

ATP is bound by residues Ser-59 and Arg-62. Ser-59 and Arg-62 together coordinate CTP. Mg(2+) contacts are provided by Asp-71, Asp-73, and Asp-125. Residues His-148, Lys-167, and Tyr-176 each contribute to the ATP site. Residues His-148, Lys-167, and Tyr-176 each coordinate CTP.

The protein belongs to the tRNA nucleotidyltransferase/poly(A) polymerase family. Archaeal CCA-adding enzyme subfamily. As to quaternary structure, homodimer. The cofactor is Mg(2+).

It catalyses the reaction a tRNA precursor + 2 CTP + ATP = a tRNA with a 3' CCA end + 3 diphosphate. It carries out the reaction a tRNA with a 3' CCA end + 2 CTP + ATP = a tRNA with a 3' CCACCA end + 3 diphosphate. Functionally, catalyzes the addition and repair of the essential 3'-terminal CCA sequence in tRNAs without using a nucleic acid template. Adds these three nucleotides in the order of C, C, and A to the tRNA nucleotide-73, using CTP and ATP as substrates and producing inorganic pyrophosphate. tRNA 3'-terminal CCA addition is required both for tRNA processing and repair. Also involved in tRNA surveillance by mediating tandem CCA addition to generate a CCACCA at the 3' terminus of unstable tRNAs. While stable tRNAs receive only 3'-terminal CCA, unstable tRNAs are marked with CCACCA and rapidly degraded. In Methanosarcina acetivorans (strain ATCC 35395 / DSM 2834 / JCM 12185 / C2A), this protein is CCA-adding enzyme.